The sequence spans 448 residues: Homogentisate 1,2-dioxygenase (448 aa).

The active-site Proton acceptor is histidine 303. Fe cation is bound by residues histidine 346 and glutamate 352. Homogentisate-binding residues include tyrosine 361 and histidine 382. Residue histidine 382 participates in Fe cation binding.

Belongs to the homogentisate dioxygenase family. In terms of assembly, hexamer; dimer of trimers. Fe cation is required as a cofactor.

The catalysed reaction is homogentisate + O2 = 4-maleylacetoacetate + H(+). It participates in amino-acid degradation; L-phenylalanine degradation; acetoacetate and fumarate from L-phenylalanine: step 4/6. In terms of biological role, involved in the catabolism of homogentisate (2,5-dihydroxyphenylacetate or 2,5-OH-PhAc), a central intermediate in the degradation of phenylalanine and tyrosine. Catalyzes the oxidative ring cleavage of the aromatic ring of homogentisate to yield maleylacetoacetate. The chain is Homogentisate 1,2-dioxygenase from Rhodopseudomonas palustris (strain TIE-1).